We begin with the raw amino-acid sequence, 1063 residues long: MASTTPITMEDLQKALEAQSRALRAELAAGASQPRRPRPPRQRDSSTSGDDSGRDSGGPRRRRGNRGRGQRKDWSRAPPPPEERQEGRSQTPAPKPSRAPPQQPQPPRMQTGRGGSAPRPELGPPTNPFQAAVARGLRPPLHDPDTEAPTEACVTSWLWSEGEGAVFYRVDLHFTNLGTPPLDEDGRWDPALMYNPCGPEPPAHVVRAYNQPAGDVRGVWGKGERTYAEQDFRVGGTRWHRLLRMPVRGLDGDSAPLPPHTTERIETRSARHPWRIRFGAPQAFLAGLLLAAVAVGTARAGLQPRVDMAAPPTPPQPPRAHGQHYGHHHHQLPFLGHDGHHGGTLRVGQHHRNASDVLPGHWLQGGWGCYNLSDWHQGTHVCHTKHMDFWCVEHDRPPPATPTPLTTAANSITAATPATAPAPCHAGLNDSCGGFLSGCGPMRLRHGADTRCGRLICGLSTTAQYPPTRFGCAMRWGLPPWELVVLTARPEDGWTCRGVPAHPGTRCPELVSPMGRATCSPASALWLATANALSLDHALAAFVLLVPWVLIFMVCRRACRRRGAAAALTAVVLQGYNPPAYGEEAFTYLCTAPGCATQTPVPVRLAGVRFESKIVDGGCFAPWDLEATGACICEIPTDVSCEGLGAWVPTAPCARIWNGTQRACTFWAVNAYSSGGYAQLASYFNPGGSYYKQYHPTACEVEPAFGHSDAACWGFPTDTVMSVFALASYVQHPHKTVRVKFHTETRTVWQLSVAGVSCDVTTEHPFCNTPHGQLEVQVPPDPGDMVEYIMNYTGNQQSRWGLGSPNCHGPDWASPVCQRHSPDCSRLVGATPERPRLRLVDADDPLLRTAPGPGEVWVTPVIGSQARKCGLHIRAGPYGHATVEMPEWIHAHTTSDPWHPPGPLGLKFKTVRPVTLPRALAPPRNVRVTGCYQCGTPALVEGLAPGGGNCHLTVNGEDVGAFPPGKFVTAALLNTPPPYQVSCGGESDRASARVIDPAAQSFTGVVYGTHTTAVSETRQTWAEWAAAHWWQLTLGAICALPLAGLLACCAKCLYYLRGAIAPR.

The segment at 1-131 (MASTTPITME…LGPPTNPFQA (131 aa)) is disordered. Positions 30 to 69 (GASQPRRPRPPRQRDSSTSGDDSGRDSGGPRRRRGNRGRG) are human C1QBP/SF2P32-binding. The residue at position 46 (Ser-46) is a Phosphoserine; by host. Over residues 59–69 (PRRRRGNRGRG) the composition is skewed to basic residues. A compositionally biased stretch (basic and acidic residues) spans 70–87 (QRKDWSRAPPPPEERQEG). The span at 93–107 (APKPSRAPPQQPQPP) shows a compositional bias: pro residues. Cys-153 and Cys-197 are oxidised to a cystine. A functions as E2 signal peptide region spans residues 279–300 (GAPQAFLAGLLLAAVAVGTARA). Residues 301–534 (GLQPRVDMAA…LWLATANALS (234 aa)) are Extracellular-facing. 3 N-linked (GlcNAc...) asparagine; by host glycosylation sites follow: Asn-353, Asn-371, and Asn-429. The chain crosses the membrane as a helical span at residues 535 to 555 (LDHALAAFVLLVPWVLIFMVC). Residues 556–582 (RRACRRRGAAAALTAVVLQGYNPPAYG) are Cytoplasmic-facing. The tract at residues 563 to 582 (GAAAALTAVVLQGYNPPAYG) is functions as E1 signal peptide. The Extracellular segment spans residues 583–1028 (EEAFTYLCTA…QTWAEWAAAH (446 aa)). 8 cysteine pairs are disulfide-bonded: Cys-590-Cys-595, Cys-619-Cys-824, Cys-641-Cys-653, Cys-699-Cys-712, Cys-758-Cys-767, Cys-807-Cys-817, Cys-931-Cys-934, and Cys-950-Cys-983. N-linked (GlcNAc...) asparagine; by host glycosylation is present at Asn-658. Residues Asn-670 and Ala-671 each coordinate Ca(2+). Ca(2+)-binding residues include Asp-718 and Thr-719. The N-linked (GlcNAc...) asparagine; by host glycan is linked to Asn-791. O-linked (GalNAc...) threonine; by host glycans are attached at residues Thr-1011 and Thr-1012. Residues 1029-1049 (WWQLTLGAICALPLAGLLACC) traverse the membrane as a helical segment. Residues 1050–1063 (AKCLYYLRGAIAPR) lie on the Extracellular side of the membrane.

As to quaternary structure, homodimer; further assembles into homooligomer. Interacts with human C1QBP. Interacts (via N-terminus) with protease/methyltransferase p150. Heterodimer with spike glycoprotein E2. In terms of assembly, heterodimer with spike glycoprotein E1. Structural polyprotein: Specific enzymatic cleavages in vivo yield mature proteins. Two signal peptidase-mediated cleavages within the polyprotein produce the structural proteins capsid, E2, and E1. The E2 signal peptide remains attached to the C-terminus of the capsid protein after cleavage by the signal peptidase. Another signal peptide at E2 C-terminus directs E1 to the ER, with a similar mechanism. Post-translationally, contains three N-linked oligosaccharides. In terms of processing, capsid is phosphorylated on Ser-46 by host. This phosphorylation negatively regulates capsid protein RNA-binding activity. Dephosphorylated by human PP1A.

The protein localises to the virion. It is found in the host cytoplasm. It localises to the host mitochondrion. Its subcellular location is the virion membrane. The protein resides in the host Golgi apparatus membrane. In terms of biological role, capsid protein interacts with genomic RNA and assembles into icosahedric core particles 65-70 nm in diameter. The resulting nucleocapsid eventually associates with the cytoplasmic domain of E2 at the cell membrane, leading to budding and formation of mature virions from host Golgi membranes. Phosphorylation negatively regulates RNA-binding activity, possibly delaying virion assembly during the viral replication phase. Capsid protein dimerizes and becomes disulfide-linked in the virion. Modulates genomic RNA replication. Modulates subgenomic RNA synthesis by interacting with human C1QBP/SF2P32. Induces both perinuclear clustering of mitochondria and the formation of electron-dense intermitochondrial plaques, both hallmarks of rubella virus infected cells. Induces apoptosis when expressed in transfected cells. Responsible for viral attachment to target host cell, by binding to the cell receptor. Its transport to the plasma membrane depends on interaction with E1 protein. The surface glycoproteins display an irregular helical organization and a pseudo-tetrameric inner nucleocapsid arrangement. Functionally, class II viral fusion protein. Fusion activity is inactive as long as E1 is bound to E2 in mature virion. After virus attachment to target cell and clathrin-mediated endocytosis, acidification of the endosome would induce dissociation of E1/E2 heterodimer and concomitant trimerization of the E1 subunits. This E1 homotrimer is fusion active, and promotes release of viral nucleocapsid in cytoplasm after endosome and viral membrane fusion. The cytoplasmic tail of spike glycoprotein E1 modulates virus release. The surface glycoproteins display an irregular helical organization and a pseudo-tetrameric inner nucleocapsid arrangement. This chain is Structural polyprotein, found in Rubella virus (strain Cendehill) (RUBV).